The following is a 347-amino-acid chain: DnaJ homolog subfamily C member 22 (347 aa).

The TM2 domain maps to 4–50 (GLLMTYTLWAVGGPAGLHHLYLGRDSHALLWMLTLGGGGLGWLWEFW). 7 helical membrane passes run 5-25 (LLMT…HLYL), 32-52 (LLWM…FWML), 81-101 (FVAQ…SLSF), 105-125 (FYIV…AAVG), 135-155 (LGAA…ILPI), 186-206 (GLAY…HTAV), and 218-238 (FLSW…VLLL). One can recognise a J domain in the interval 277 to 347 (LALQVFGLSE…GSWRWEETSF (71 aa)).

The protein resides in the membrane. In terms of biological role, may function as a co-chaperone. The chain is DnaJ homolog subfamily C member 22 (DNAJC22) from Bos taurus (Bovine).